The primary structure comprises 88 residues: Small ribosomal subunit protein eS25B (88 aa).

It belongs to the eukaryotic ribosomal protein eS25 family. In terms of assembly, component of the small ribosomal subunit (SSU). Mature yeast ribosomes consist of a small (40S) and a large (60S) subunit. The 40S small subunit contains 1 molecule of ribosomal RNA (18S rRNA) and at least 33 different proteins. The large 60S subunit contains 3 rRNA molecules (25S, 5.8S and 5S rRNA) and at least 46 different proteins.

The protein localises to the cytoplasm. Its function is as follows. Component of the ribosome, a large ribonucleoprotein complex responsible for the synthesis of proteins in the cell. The small ribosomal subunit (SSU) binds messenger RNAs (mRNAs) and translates the encoded message by selecting cognate aminoacyl-transfer RNA (tRNA) molecules. The large subunit (LSU) contains the ribosomal catalytic site termed the peptidyl transferase center (PTC), which catalyzes the formation of peptide bonds, thereby polymerizing the amino acids delivered by tRNAs into a polypeptide chain. The nascent polypeptides leave the ribosome through a tunnel in the LSU and interact with protein factors that function in enzymatic processing, targeting, and the membrane insertion of nascent chains at the exit of the ribosomal tunnel. The protein is Small ribosomal subunit protein eS25B (rps2501) of Schizosaccharomyces pombe (strain 972 / ATCC 24843) (Fission yeast).